The chain runs to 185 residues: Ribosome-recycling factor (185 aa).

Belongs to the RRF family.

Its subcellular location is the cytoplasm. Responsible for the release of ribosomes from messenger RNA at the termination of protein biosynthesis. May increase the efficiency of translation by recycling ribosomes from one round of translation to another. This is Ribosome-recycling factor from Coxiella burnetii (strain RSA 493 / Nine Mile phase I).